Reading from the N-terminus, the 683-residue chain is Multidrug resistance protein MdtO (683 aa).

9 helical membrane passes run 43 to 63 (VILISMTFEIPFVALSLAVLF), 75 to 95 (FVAILFVVATVLEIGSLFLIY), 100 to 120 (GEPLIRLIIAGPILMGCMFLM), 125 to 145 (LGLVFFAVAIVAIYGQTFPAM), 158 to 178 (WCIVVGLYPTLLMTLIGVLWF), 402 to 422 (FGGAFCGAILALLFTLLVMPW), 426 to 446 (IVELLFVLAPIFLLGAWIATS), 457 to 477 (MVVTFALATLENVFGPVYDLV), and 483 to 503 (ALGIIIGTVVSAVIYTFVWPE).

Belongs to the MdtO family. Could be part of a tripartite efflux system composed of MdtN, MdtO and MdtP.

The protein localises to the cell inner membrane. Could be involved in resistance to puromycin, acriflavine and tetraphenylarsonium chloride. This is Multidrug resistance protein MdtO (mdtO) from Escherichia coli (strain K12).